A 249-amino-acid chain; its full sequence is MRLDLYPAIDLKDGQVVRLRQGRMDEATVYGVDPVRIAARWAEAGARWIHVVDLDGALRGRPQNAAAVRAIVEALRQRHPGVRVQLGGGLRTLEALEAALALGVSRAIIGTSALEGDVAARAVARFGPDRVAVSIDARGGFVAARGWVEVTRVRAVDLAVRMREVGVRTVVYTDIATDGMLTGPNFAELEMMGRTGLDVIASGGISSLEDIRRLTEIPGVAGAIIGRALYTGAVDLAEALSLCGETRDT.

D10 functions as the Proton acceptor in the catalytic mechanism. The active-site Proton donor is the D136.

This sequence belongs to the HisA/HisF family.

The protein localises to the cytoplasm. It catalyses the reaction 1-(5-phospho-beta-D-ribosyl)-5-[(5-phospho-beta-D-ribosylamino)methylideneamino]imidazole-4-carboxamide = 5-[(5-phospho-1-deoxy-D-ribulos-1-ylimino)methylamino]-1-(5-phospho-beta-D-ribosyl)imidazole-4-carboxamide. The protein operates within amino-acid biosynthesis; L-histidine biosynthesis; L-histidine from 5-phospho-alpha-D-ribose 1-diphosphate: step 4/9. The polypeptide is 1-(5-phosphoribosyl)-5-[(5-phosphoribosylamino)methylideneamino] imidazole-4-carboxamide isomerase (Symbiobacterium thermophilum (strain DSM 24528 / JCM 14929 / IAM 14863 / T)).